A 121-amino-acid polypeptide reads, in one-letter code: Large ribosomal subunit protein eL31 (121 aa).

This sequence belongs to the eukaryotic ribosomal protein eL31 family.

The protein is Large ribosomal subunit protein eL31 (RPL31) of Perilla frutescens (Beefsteak mint).